Reading from the N-terminus, the 132-residue chain is Large ribosomal subunit protein bL19 (132 aa).

Belongs to the bacterial ribosomal protein bL19 family.

Functionally, this protein is located at the 30S-50S ribosomal subunit interface and may play a role in the structure and function of the aminoacyl-tRNA binding site. The chain is Large ribosomal subunit protein bL19 from Nitrosomonas europaea (strain ATCC 19718 / CIP 103999 / KCTC 2705 / NBRC 14298).